A 450-amino-acid chain; its full sequence is Probable glycine dehydrogenase (decarboxylating) subunit 1 (450 aa).

Belongs to the GcvP family. N-terminal subunit subfamily. In terms of assembly, the glycine cleavage system is composed of four proteins: P, T, L and H. In this organism, the P 'protein' is a heterodimer of two subunits.

The enzyme catalyses N(6)-[(R)-lipoyl]-L-lysyl-[glycine-cleavage complex H protein] + glycine + H(+) = N(6)-[(R)-S(8)-aminomethyldihydrolipoyl]-L-lysyl-[glycine-cleavage complex H protein] + CO2. In terms of biological role, the glycine cleavage system catalyzes the degradation of glycine. The P protein binds the alpha-amino group of glycine through its pyridoxal phosphate cofactor; CO(2) is released and the remaining methylamine moiety is then transferred to the lipoamide cofactor of the H protein. The sequence is that of Probable glycine dehydrogenase (decarboxylating) subunit 1 from Desulfotalea psychrophila (strain LSv54 / DSM 12343).